We begin with the raw amino-acid sequence, 274 residues long: MSYGPLDMYRNPGPSGPQPRDFNSIIQTCSGNIQRISQATAQIKNLMSQLGTKQDSSKLQENLQQFQHSTNQLAKETNELLKELGSLPLPLSASEQRQQKLQKERLMNDFSSALNNFQVVQRKVSEKEKESIARARAGSRLSAEDRQREEQLVSFDSHEEWNQMQSQEEEAAITEQDLELIKERETAIQQLEADILDVNQIFKDLAMMIHDQGDLIDSIEANVESSEVHVERASDQLQRAAYYQKKSRKKMCILVLVLSVIVTVLVVVIWVASK.

Residues 1–20 are disordered; it reads MSYGPLDMYRNPGPSGPQPR. Position 2 is an N-acetylserine (S2). Over 2-250 the chain is Cytoplasmic; that stretch reads SYGPLDMYRN…AYYQKKSRKK (249 aa). Residues 34–80 are a coiled coil; sequence QRISQATAQIKNLMSQLGTKQDSSKLQENLQQFQHSTNQLAKETNEL. A disordered region spans residues 128 to 150; it reads EKESIARARAGSRLSAEDRQREE. S139, S142, S218, and S225 each carry phosphoserine. Residues 178 to 240 form the t-SNARE coiled-coil homology domain; it reads LELIKERETA…ERASDQLQRA (63 aa). The chain crosses the membrane as a helical; Anchor for type IV membrane protein span at residues 251 to 271; sequence MCILVLVLSVIVTVLVVVIWV. The Vesicular portion of the chain corresponds to 272-274; it reads ASK.

Belongs to the syntaxin family. As to quaternary structure, associates with the BLOC-1 complex. Interacts with BLOC1S6. Interacts with NAPA and SNAP23. Identified in a complex containing STX6, STX12, VAMP4 and VTI1A. Interacts with GRIPAP1. Forms a complex with GRIP1, GRIA2 and NSG1; controls the intracellular fate of AMPAR and the endosomal sorting of the GRIA2 subunit toward recycling and membrane targeting. Interacts with NSG1. Interacts with TPC1. Interacts (via N-terminus) with VPS13B. In terms of tissue distribution, ubiquitous. Highly expressed in brain.

The protein localises to the endosome membrane. It localises to the golgi apparatus membrane. The protein resides in the endomembrane system. It is found in the early endosome membrane. Its subcellular location is the recycling endosome membrane. SNARE promoting fusion of transport vesicles with target membranes. Together with SNARE STX6, promotes movement of vesicles from endosomes to the cell membrane, and may therefore function in the endocytic recycling pathway. Through complex formation with GRIP1, GRIA2 and NSG1 controls the intracellular fate of AMPAR and the endosomal sorting of the GRIA2 subunit toward recycling and membrane targeting. This chain is Syntaxin-12 (Stx12), found in Rattus norvegicus (Rat).